A 78-amino-acid polypeptide reads, in one-letter code: Small ribosomal subunit protein bS20 (78 aa).

The interval 1–34 (MANIKSNLKRNKQNRARHTVVHSQTSAVKTQIKK) is disordered. Positions 7–20 (NLKRNKQNRARHTV) are enriched in basic residues. Residues 21-34 (VHSQTSAVKTQIKK) show a composition bias toward polar residues.

Belongs to the bacterial ribosomal protein bS20 family.

Its function is as follows. Binds directly to 16S ribosomal RNA. The protein is Small ribosomal subunit protein bS20 of Malacoplasma penetrans (strain HF-2) (Mycoplasma penetrans).